The following is a 1061-amino-acid chain: E3 SUMO-protein ligase ZNF451 (1061 aa).

Residues 1 to 38 (MGDPGSEIIESVPPAGPEASESTTDENEDDIQFVSEGP) are disordered. The tract at residues 1–246 (MGDPGSEIIE…TDDGHNNNLL (246 aa)) is sufficient for E3 SUMO-protein ligase activity. An important for interaction with SUMO1 and SUMO2 region spans residues 1-344 (MGDPGSEIIE…RVHCRNAGPV (344 aa)). The tract at residues 30 to 37 (DIQFVSEG) is interaction with SUMO2 1. Residues 38–41 (PLRP) carry the PLRP motif. The tract at residues 42-50 (VLEYIDLVS) is interaction with SUMO2 2. Residues Lys75, Lys77, Lys106, Ile121, Ala130, Leu138, Lys139, Lys144, and Lys153 each participate in a glycyl lysine isopeptide (Lys-Gly) (interchain with G-Cter in SUMO2) cross-link. Ser155 is modified (phosphoserine). Position 158 is an omega-N-methylarginine (Arg158). Glycyl lysine isopeptide (Lys-Gly) (interchain with G-Cter in SUMO2) cross-links involve residues Val164 and Lys167. An important for interaction with SMAD4 region spans residues 168–525 (PILCPIMHCN…HMSRIHGGAH (358 aa)). A C2H2-type 1 zinc finger spans residues 169 to 195 (ILCPIMHCNKEFDNGHLLLGHLKRFDH). Glycyl lysine isopeptide (Lys-Gly) (interchain with G-Cter in SUMO2) cross-links involve residues Gln226, Gly240, Pro247, Ser263, Lys270, Lys275, Lys283, Asp286, Lys288, Pro293, Lys301, and Lys309. A C2H2-type 2 zinc finger spans residues 253-277 (FACPNCFLLFSRKEECSKHMSGKNH). A C2H2-type 3 zinc finger spans residues 315 to 337 (VKCVACHKTLRSHMELTAHFRVH). A Glycyl lysine isopeptide (Lys-Gly) (interchain with G-Cter in SUMO2) cross-link involves residue Lys357. The C2H2-type 4 zinc finger occupies 362–386 (GYCPDCNQVFVDETSTQNHKQNSGH). A Glycyl lysine isopeptide (Lys-Gly) (interchain with G-Cter in SUMO2) cross-link involves residue Lys423. Ser432 is subject to Phosphoserine. Glycyl lysine isopeptide (Lys-Gly) (interchain with G-Cter in SUMO2) cross-links involve residues Lys434, Lys446, Lys452, Lys454, Lys464, Phe473, Val490, Cys500, Lys505, Asp508, Gly522, Trp532, Lys543, and Lys585. The segment at 498-521 (YKCVVCGKVCDDSGVIRLHMSRIH) adopts a C2H2-type 5 zinc-finger fold. The C2H2-type 6 zinc finger occupies 531–554 (FWCRTCKKELTRKDTIMAHVTEFH). The C2H2-type 7; atypical zinc finger occupies 606–631 (WQCRICEDMFDSQEYVKQHCMSLASH). Residues Lys632, Lys647, and Lys664 each participate in a glycyl lysine isopeptide (Lys-Gly) (interchain with G-Cter in SUMO2) cross-link. The C2H2-type 8 zinc-finger motif lies at 636-659 (YSCAHCRKPFHKIETLYRHCQDEH). The segment at 667–690 (YFCGLCDLIFNVEEAFLSHYEEHH) adopts a C2H2-type 9 zinc-finger fold. Lys706 participates in a covalent cross-link: Glycyl lysine isopeptide (Lys-Gly) (interchain with G-Cter in SUMO1); alternate. Lys706 is covalently cross-linked (Glycyl lysine isopeptide (Lys-Gly) (interchain with G-Cter in SUMO2); alternate). Glycyl lysine isopeptide (Lys-Gly) (interchain with G-Cter in SUMO2) cross-links involve residues Lys731 and Lys748. The C2H2-type 10 zinc finger occupies 753–776 (FRCSLCSATAQNLTDMNTHIHQVH). Residues Lys777, Lys779, Lys790, Lys817, Lys827, Lys832, Lys843, Lys845, Lys852, Lys951, Lys992, and Lys993 each participate in a glycyl lysine isopeptide (Lys-Gly) (interchain with G-Cter in SUMO2) cross-link. The segment at 789 to 812 (IKCGTCTKAFHDPESAQQHFHRKH) adopts a C2H2-type 11 zinc-finger fold. An important for ubiquitin binding region spans residues 1050 to 1061 (LEEAIRRSLEEM).

The protein belongs to the krueppel C2H2-type zinc-finger protein family. Homooligomer. Interacts (via N-terminal region) with SUMO1. Interacts (via N-terminal region) with SUMO2. Interacts simultaneously with two SUMO2 chains. Identified in a complex with SUMO2 and UBE2I/UBC9, where one ZNF451 interacts with one UBE2I/UBC9 and two SUMO2 chains, one bound to the UBE2I/UBC9 active site and the other to another region of the same UBE2I/UBC9 molecule. Interacts (via C-terminus) with ubiquitin. Interacts (via N-terminal zinc-finger domains) with SMAD4 (via MH2 domain). Interacts with SMAD2 and SMAD3. Identified in a complex that contains at least ZNF451, SMAD2, SMAD3 and SMAD4. Interacts with EP300. Inhibits interaction between EP300 and the SMAD4 complex. Interacts with SIMC1. Post-translationally, sumoylated. Predominantly sumoylated on the N-terminal region that is important for interaction with SUMO1 and SUMO2. Sumoylation is important for localization in nuclear granules; desumoylation leads to diffuse nucleoplasmic location. Autosumoylated (in vitro). Sumoylation enhances E3 SUMO-protein ligase activity.

The protein localises to the nucleus. It localises to the PML body. Its subcellular location is the nucleoplasm. Its pathway is protein modification; protein sumoylation. E3 SUMO-protein ligase; has a preference for SUMO2 and SUMO3 and facilitates UBE2I/UBC9-mediated sumoylation of target proteins. Plays a role in protein SUMO2 modification in response to stress caused by DNA damage and by proteasome inhibitors (in vitro). Required for MCM4 sumoylation. Has no activity with SUMO1. Preferentially transfers an additional SUMO2 chain onto the SUMO2 consensus site 'Lys-11'. Negatively regulates transcriptional activation mediated by the SMAD4 complex in response to TGF-beta signaling. Inhibits EP300-mediated acetylation of histone H3 at 'Lys-9'. Plays a role in regulating the transcription of AR targets. The protein is E3 SUMO-protein ligase ZNF451 (ZNF451) of Homo sapiens (Human).